We begin with the raw amino-acid sequence, 232 residues long: Phosphatidylserine decarboxylase proenzyme (232 aa).

Ser190 serves as the catalytic Schiff-base intermediate with substrate; via pyruvic acid. Ser190 bears the Pyruvic acid (Ser); by autocatalysis mark.

Belongs to the phosphatidylserine decarboxylase family. PSD-A subfamily. Heterodimer of a large membrane-associated beta subunit and a small pyruvoyl-containing alpha subunit. It depends on pyruvate as a cofactor. In terms of processing, is synthesized initially as an inactive proenzyme. Formation of the active enzyme involves a self-maturation process in which the active site pyruvoyl group is generated from an internal serine residue via an autocatalytic post-translational modification. Two non-identical subunits are generated from the proenzyme in this reaction, and the pyruvate is formed at the N-terminus of the alpha chain, which is derived from the carboxyl end of the proenzyme. The post-translation cleavage follows an unusual pathway, termed non-hydrolytic serinolysis, in which the side chain hydroxyl group of the serine supplies its oxygen atom to form the C-terminus of the beta chain, while the remainder of the serine residue undergoes an oxidative deamination to produce ammonia and the pyruvoyl prosthetic group on the alpha chain.

It is found in the cell membrane. It carries out the reaction a 1,2-diacyl-sn-glycero-3-phospho-L-serine + H(+) = a 1,2-diacyl-sn-glycero-3-phosphoethanolamine + CO2. Its pathway is phospholipid metabolism; phosphatidylethanolamine biosynthesis; phosphatidylethanolamine from CDP-diacylglycerol: step 2/2. Functionally, catalyzes the formation of phosphatidylethanolamine (PtdEtn) from phosphatidylserine (PtdSer). The protein is Phosphatidylserine decarboxylase proenzyme of Bartonella henselae (strain ATCC 49882 / DSM 28221 / CCUG 30454 / Houston 1) (Rochalimaea henselae).